The chain runs to 858 residues: Volume-regulated anion channel subunit LRRC8D (858 aa).

At 1-22 the chain is on the cytoplasmic side; the sequence is MFTLAEVASLNDIQPTYRILKP. The helical transmembrane segment at 23–48 threads the bilayer; sequence WWDVFMDYLAVVMLMVAIFAGTMQLT. The Extracellular portion of the chain corresponds to 49-163; sequence KDQVVCLPVL…YHLALPWYSK (115 aa). Cys54 and Cys354 are oxidised to a cystine. Residues 164-182 form a helical membrane-spanning segment; that stretch reads YFPYLALIHTIILMVSSNF. Residues 183–308 are Cytoplasmic-facing; that stretch reads WFKYPKTCSK…EDSDLIYKLY (126 aa). The tract at residues 221-251 is disordered; the sequence is SEENKQRITGAQTLPKHVSTSSDEGSPSAST. Over residues 227–251 the composition is skewed to polar residues; sequence RITGAQTLPKHVSTSSDEGSPSAST. Residues Ser241, Ser242, and Ser246 each carry the phosphoserine modification. The helical transmembrane segment at 309–328 threads the bilayer; it reads VVQTVIKTAKFIFILCYTAN. At 329–360 the chain is on the extracellular side; the sequence is FVNAISFEHVCKPKVEHLIGYEVFECTHNMAY. A helical membrane pass occupies residues 361-386; that stretch reads MLKKLLISYISIICVYGFICLYTLFW. Over 387-858 the chain is Cytoplasmic; it reads LFRIPLKEYS…DINIPFANGI (472 aa). LRR repeat units lie at residues 514-534, 538-559, 561-582, 589-609, 612-632, 636-657, 659-680, 684-705, 707-728, 730-751, 753-774, 776-797, and 799-820; these read NLQE…AFSF, HLRC…VYLL, NLRE…IGLE, HLKI…ITDV, HLTK…NSLK, NVAE…IFSL, NLQE…ISFQ, RLTC…ITHV, NLES…VFSL, KLRC…IGLL, NLQH…LFKC, KLRT…VGQL, and QLTQ…LGQC.

It belongs to the LRRC8 family. As to quaternary structure, heterohexamer; oligomerizes with other LRRC8 proteins (LRRC8A, LRRC8B, LRRC8C and/or LRRC8E) to form a heterohexamer. In vivo, the subunit composition may depend primarily on expression levels, and heterooligomeric channels containing various proportions of the different LRRC8 proteins may coexist.

Its subcellular location is the cell membrane. The protein resides in the endoplasmic reticulum membrane. The enzyme catalyses chloride(in) = chloride(out). The catalysed reaction is iodide(out) = iodide(in). It carries out the reaction taurine(out) = taurine(in). Functionally, non-essential component of the volume-regulated anion channel (VRAC, also named VSOAC channel), an anion channel required to maintain a constant cell volume in response to extracellular or intracellular osmotic changes. The VRAC channel conducts iodide better than chloride and can also conduct organic osmolytes like taurine. Plays a redundant role in the efflux of amino acids, such as aspartate, in response to osmotic stress. LRRC8A and LRRC8D are required for the uptake of the drug cisplatin. Channel activity requires LRRC8A plus at least one other family member (LRRC8B, LRRC8C, LRRC8D or LRRC8E); channel characteristics depend on the precise subunit composition. Also acts as a regulator of glucose-sensing in pancreatic beta cells: VRAC currents, generated in response to hypotonicity- or glucose-induced beta cell swelling, depolarize cells, thereby causing electrical excitation, leading to increase glucose sensitivity and insulin secretion. VRAC channels containing LRRC8D inhibit transport of immunoreactive cyclic dinucleotide GMP-AMP (2'-3'-cGAMP), an immune messenger produced in response to DNA virus in the cytosol. Mediates the import of the antibiotic blasticidin-S into the cell. The chain is Volume-regulated anion channel subunit LRRC8D from Homo sapiens (Human).